The following is a 661-amino-acid chain: Sodium/potassium/calcium exchanger 2 (661 aa).

The Cytoplasmic portion of the chain corresponds to 1–38; that stretch reads MDLQQSTTITSLEKWCLDESLSGCRRHYSVKKKLKLIR. The helical transmembrane segment at 39–59 threads the bilayer; the sequence is VLGLFMGLVAISTVSFSISAF. The Extracellular portion of the chain corresponds to 60 to 132; the sequence is SETDTQSTGE…DIFSLEERRK (73 aa). A disordered region spans residues 99–120; that stretch reads PQPPLSKEGESENSTDHAQGDY. The span at 105–120 shows a compositional bias: basic and acidic residues; it reads KEGESENSTDHAQGDY. An N-linked (GlcNAc...) asparagine glycan is attached at N111. Residues 133–153 traverse the membrane as a helical segment; sequence GAIILHVIGMIYMFIALAIVC. Over 154–178 the chain is Cytoplasmic; sequence DEFFVPSLTVITEKLGISDDVAGAT. Residues 174–214 form an Alpha-1 repeat; the sequence is VAGATFMAAGGSAPELFTSLIGVFIAHSNVGIGTIVGSAVF. A helical membrane pass occupies residues 179–199; sequence FMAAGGSAPELFTSLIGVFIA. Topologically, residues 200–204 are extracellular; that stretch reads HSNVG. The helical transmembrane segment at 205–225 threads the bilayer; it reads IGTIVGSAVFNILFVIGMCAL. Topologically, residues 226–243 are cytoplasmic; sequence FSREILNLTWWPLFRDVS. Residues 244–264 form a helical membrane-spanning segment; it reads FYIVDLIMLIIFFLDNVIMWW. E265 is a topological domain (extracellular). Residues 266–286 traverse the membrane as a helical segment; that stretch reads SLLLLTAYFCYVVFMKFNVQV. Over 287–497 the chain is Cytoplasmic; that stretch reads EKWVKQMINR…PDVRKPSSRK (211 aa). The interval 306–336 is disordered; it reads EAQAKPSAARDKDEPTLPAKPRLQRGGSSAS. 2 positions are modified to phosphoserine: S336 and S340. A disordered region spans residues 397 to 439; sequence DENERQNGAANHVEKIELPNSTSTDVEMTPSSDASEPVQNGNL. Over residues 415 to 439 the composition is skewed to polar residues; it reads PNSTSTDVEMTPSSDASEPVQNGNL. A helical membrane pass occupies residues 498-518; it reads FFPITFFGSITWIAVFSYLMV. Topologically, residues 519–533 are extracellular; sequence WWAHQVGETIGISEE. The chain crosses the membrane as a helical span at residues 534–554; that stretch reads IMGLTILAAGTSIPDLITSVI. The stretch at 541-572 is one Alpha-2 repeat; sequence AAGTSIPDLITSVIVARKGLGDMAVSSSVGSN. Residues 555–569 lie on the Cytoplasmic side of the membrane; it reads VARKGLGDMAVSSSV. A helical transmembrane segment spans residues 570 to 590; that stretch reads GSNIFDITVGLPLPWLLYTVI. Residues 591 to 602 lie on the Extracellular side of the membrane; the sequence is HRFQPVAVSSNG. The chain crosses the membrane as a helical span at residues 603–623; it reads LFCAIVLLFIMLLFVILSIAL. Residues 624 to 630 lie on the Cytoplasmic side of the membrane; that stretch reads CKWRMNK. A helical membrane pass occupies residues 631–651; it reads ILGFIMFGLYFVFLVVSVLLE. At 652-661 the chain is on the extracellular side; the sequence is DRILTCPVSI.

Belongs to the Ca(2+):cation antiporter (CaCA) (TC 2.A.19) family. SLC24A subfamily.

It localises to the cell membrane. The catalysed reaction is Ca(2+)(out) + K(+)(out) + 4 Na(+)(in) = Ca(2+)(in) + K(+)(in) + 4 Na(+)(out). Its function is as follows. Calcium, potassium:sodium antiporter that transports 1 Ca(2+) and 1 K(+) in exchange for 4 Na(+). Required for learming and memory by regulating neuronal Ca(2+), which is essential for the development of synaptic plasticity. The polypeptide is Sodium/potassium/calcium exchanger 2 (SLC24A2) (Homo sapiens (Human)).